A 1375-amino-acid polypeptide reads, in one-letter code: Protein lingerer (1375 aa).

Residues 1-69 (MSTQTRSGGG…KAQPKATTEQ (69 aa)) form a disordered region. Over residues 53–62 (SKTDKPEKAQ) the composition is skewed to basic and acidic residues. The UBA domain occupies 84 to 124 (QINEKVLLLLTMTQRSEEEVCCALNECDYDLEAAANFLIEE). 2 stretches are compositionally biased toward low complexity: residues 142–161 (ANNT…GNGN) and 173–184 (SNRGGTRGSSDS). Positions 142–286 (ANNTADGAAG…GSGRGGNANE (145 aa)) are disordered. Over residues 185-204 (RGWRGRETRENERNQRESRE) the composition is skewed to basic and acidic residues. Residues 228–282 (RNGGGRSGPGGGGRGGGFVSRSGRGGGRMGGRTGGPRGDRGSGGPGGAYGSGRGG) are compositionally biased toward gly residues. Phosphotyrosine is present on tyrosine 321. Serine 324 carries the post-translational modification Phosphoserine. Composition is skewed to polar residues over residues 374–387 (VQQG…SSSG) and 395–412 (ATLS…SAAV). 2 disordered regions span residues 374–453 (VQQG…ASPD) and 613–646 (FEPL…QQQQ). A compositionally biased stretch (gly residues) spans 426-441 (SGAGTGASAAAGGGAG). 2 stretches are compositionally biased toward low complexity: residues 442-453 (STPSSFVSASPD) and 629-646 (QQQQ…QQQQ). At serine 672 the chain carries Phosphoserine. Position 673 is a phosphothreonine (threonine 673). Position 674 is a phosphoserine (serine 674). The span at 750 to 767 (QGYGSYQPSSYQQQAGSG) shows a compositional bias: low complexity. 5 disordered regions span residues 750–801 (QGYG…SGNA), 869–894 (SVST…GQTG), 987–1036 (KNTS…GGSG), 1203–1234 (SKGG…DLTS), and 1251–1277 (EKQS…TSAQ). Positions 768–781 (AQSGTGAVSGGGGT) are enriched in gly residues. Composition is skewed to low complexity over residues 789-801 (GGSS…SGNA), 869-882 (SVST…NSGS), and 987-1008 (KNTS…TGNA). Positions 1009-1036 (SGQGAGASTGGVGSSSGAGGAGSGGGSG) are enriched in gly residues. The span at 1265–1277 (MPNTQTAGGTSAQ) shows a compositional bias: polar residues.

At stage 11, expression is restricted to the neuroblasts, predominant in the central nervous system (CNS), including the brain and ventral nerve cord, and in the PNS. Later embryonic expression is seen in the gonads. Late third instar larvae show expression in the CNS, imaginal disks (including genital, eye-antennal, leg, wing and haltere disks), and gonads. In the larval brain, it is expressed in all of the glial cells and in clusters of neurons that projected contralaterally. In the larval ventral ganglion, it is expressed in subperineurial glia, peripheral exit glia, and a number of interneurons, but not in motor neurons. Isoform B is abundantly expressed in males and females. Isoform D is male specific and expressed at low levels.

Its subcellular location is the cytoplasm. Functionally, acts in the nervous system to mediate the control of copulatory organs during courtship. The protein is Protein lingerer of Drosophila melanogaster (Fruit fly).